The primary structure comprises 109 residues: FK506-binding protein (109 aa).

One can recognise a PPIase FKBP-type domain in the interval G20–Y108.

This sequence belongs to the FKBP-type PPIase family.

It catalyses the reaction [protein]-peptidylproline (omega=180) = [protein]-peptidylproline (omega=0). Its activity is regulated as follows. Inhibited by FK506. Its function is as follows. PPIases accelerate the folding of proteins. The sequence is that of FK506-binding protein (fbp) from Neisseria meningitidis serogroup A / serotype 4A (strain DSM 15465 / Z2491).